We begin with the raw amino-acid sequence, 230 residues long: Ribonuclease HII (230 aa).

Positions 1–224 (MIIIGIDEAG…CKRILDKSKQ (224 aa)) constitute an RNase H type-2 domain. A divalent metal cation-binding residues include Asp7, Glu8, and Asp112.

This sequence belongs to the RNase HII family. It depends on Mn(2+) as a cofactor. Mg(2+) is required as a cofactor.

The protein resides in the cytoplasm. The enzyme catalyses Endonucleolytic cleavage to 5'-phosphomonoester.. Its function is as follows. Endonuclease that specifically degrades the RNA of RNA-DNA hybrids. This chain is Ribonuclease HII (rnhB), found in Methanocaldococcus jannaschii (strain ATCC 43067 / DSM 2661 / JAL-1 / JCM 10045 / NBRC 100440) (Methanococcus jannaschii).